We begin with the raw amino-acid sequence, 285 residues long: Bifunctional protein FolD (285 aa).

NADP(+)-binding positions include 166 to 168 (GAS) and I232.

This sequence belongs to the tetrahydrofolate dehydrogenase/cyclohydrolase family. Homodimer.

The enzyme catalyses (6R)-5,10-methylene-5,6,7,8-tetrahydrofolate + NADP(+) = (6R)-5,10-methenyltetrahydrofolate + NADPH. The catalysed reaction is (6R)-5,10-methenyltetrahydrofolate + H2O = (6R)-10-formyltetrahydrofolate + H(+). It functions in the pathway one-carbon metabolism; tetrahydrofolate interconversion. Catalyzes the oxidation of 5,10-methylenetetrahydrofolate to 5,10-methenyltetrahydrofolate and then the hydrolysis of 5,10-methenyltetrahydrofolate to 10-formyltetrahydrofolate. The protein is Bifunctional protein FolD of Aliivibrio fischeri (strain MJ11) (Vibrio fischeri).